The sequence spans 373 residues: Queuine tRNA-ribosyltransferase (373 aa).

Residue Asp-90 is the Proton acceptor of the active site. Substrate is bound by residues 90–94 (DSGGF), Asp-144, Gln-193, and Gly-220. The RNA binding stretch occupies residues 251–257 (GVGTPED). The Nucleophile role is filled by Asp-270. The tract at residues 275-279 (TRNAR) is RNA binding; important for wobble base 34 recognition. Positions 308, 310, 313, and 339 each coordinate Zn(2+).

Belongs to the queuine tRNA-ribosyltransferase family. As to quaternary structure, homodimer. Within each dimer, one monomer is responsible for RNA recognition and catalysis, while the other monomer binds to the replacement base PreQ1. Zn(2+) is required as a cofactor.

It catalyses the reaction 7-aminomethyl-7-carbaguanine + guanosine(34) in tRNA = 7-aminomethyl-7-carbaguanosine(34) in tRNA + guanine. Its pathway is tRNA modification; tRNA-queuosine biosynthesis. In terms of biological role, catalyzes the base-exchange of a guanine (G) residue with the queuine precursor 7-aminomethyl-7-deazaguanine (PreQ1) at position 34 (anticodon wobble position) in tRNAs with GU(N) anticodons (tRNA-Asp, -Asn, -His and -Tyr). Catalysis occurs through a double-displacement mechanism. The nucleophile active site attacks the C1' of nucleotide 34 to detach the guanine base from the RNA, forming a covalent enzyme-RNA intermediate. The proton acceptor active site deprotonates the incoming PreQ1, allowing a nucleophilic attack on the C1' of the ribose to form the product. After dissociation, two additional enzymatic reactions on the tRNA convert PreQ1 to queuine (Q), resulting in the hypermodified nucleoside queuosine (7-(((4,5-cis-dihydroxy-2-cyclopenten-1-yl)amino)methyl)-7-deazaguanosine). This is Queuine tRNA-ribosyltransferase from Campylobacter jejuni subsp. jejuni serotype O:23/36 (strain 81-176).